The chain runs to 110 residues: uncharacterized protein (110 aa).

This is an uncharacterized protein from Sulfolobus islandicus rod-shaped virus 1 (SIRV-1).